Reading from the N-terminus, the 180-residue chain is ATP-dependent protease subunit HslV (180 aa).

Residue Thr5 is part of the active site. Positions 165, 168, and 171 each coordinate Na(+).

The protein belongs to the peptidase T1B family. HslV subfamily. A double ring-shaped homohexamer of HslV is capped on each side by a ring-shaped HslU homohexamer. The assembly of the HslU/HslV complex is dependent on binding of ATP.

It localises to the cytoplasm. The enzyme catalyses ATP-dependent cleavage of peptide bonds with broad specificity.. Its activity is regulated as follows. Allosterically activated by HslU binding. Its function is as follows. Protease subunit of a proteasome-like degradation complex believed to be a general protein degrading machinery. The chain is ATP-dependent protease subunit HslV from Helicobacter pylori (strain ATCC 700392 / 26695) (Campylobacter pylori).